Reading from the N-terminus, the 388-residue chain is Alpha-2A adrenergic receptor (388 aa).

Over Met-1–Ala-22 the chain is Extracellular. 3 N-linked (GlcNAc...) asparagine glycosylation sites follow: Asn-6, Asn-9, and Asn-12. Residues Leu-23–Phe-48 form a helical membrane-spanning segment. The Cytoplasmic segment spans residues Thr-49–Leu-59. The chain crosses the membrane as a helical span at residues Phe-60 to Met-85. Residues Gly-86 to Cys-95 are Extracellular-facing. A disulfide bridge connects residues Cys-95 and Cys-169. A helical membrane pass occupies residues Glu-96–Leu-118. Residues Asp-119–Arg-138 are Cytoplasmic-facing. Residues Ile-139–Lys-162 traverse the membrane as a helical segment. At Lys-163–Lys-173 the chain is on the extracellular side. A helical transmembrane segment spans residues Glu-174–Ile-198. Topologically, residues Arg-199–Phe-311 are cytoplasmic. The disordered stretch occupies residues Thr-208–Cys-291. Residues Pro-212–Leu-231 are compositionally biased toward basic and acidic residues. Over residues Leu-266 to Thr-275 the composition is skewed to basic residues. Residues Val-312–Cys-337 form a helical membrane-spanning segment. Residues Asp-338–Thr-344 are Extracellular-facing. Residues Leu-345–Asn-368 traverse the membrane as a helical segment. Topologically, residues Asn-369–Val-388 are cytoplasmic. Cys-380 carries the S-palmitoyl cysteine lipid modification.

This sequence belongs to the G-protein coupled receptor 1 family. Adrenergic receptor subfamily. ADRA2A sub-subfamily.

It localises to the cell membrane. In terms of biological role, alpha-2 adrenergic receptors mediate the catecholamine-induced inhibition of adenylate cyclase through the action of G proteins. The order of potency for this receptor is dexmedetomidine &gt; oxymetazoline = epinephrine &gt; norepinephrine. This chain is Alpha-2A adrenergic receptor, found in Danio rerio (Zebrafish).